A 670-amino-acid chain; its full sequence is Transcription factor vib-1 (670 aa).

The NDT80 DNA-binding region spans 106–341 (TEMVQDLRDD…RSPRNFQARK (236 aa)). Composition is skewed to polar residues over residues 394–438 (FTSA…TTSM) and 553–568 (LGNS…QHHP). Disordered regions lie at residues 394-457 (FTSA…SYTA) and 496-670 (SAPP…WNAT). Low complexity predominate over residues 592–605 (ASAPASAPTSAAPP). The span at 611–631 (PSQSWTSTAGEGQTSSYTNGG) shows a compositional bias: polar residues.

Its subcellular location is the nucleus. It localises to the cytoplasm. Transcription factor that acts as a positive regulator of nonrepressible acid phosphatase activity. Is a major regulator of responses to nitrogen and carbon starvation and is essential for the expression of genes involved in vegetative incompatibility (like pin-c, het-6, and tol). Vegetative incompatibility is a non-self-recognition system ubiquitous in filamentous fungi which results in programmed cell death. The protein is Transcription factor vib-1 (vib-1) of Neurospora crassa (strain ATCC 24698 / 74-OR23-1A / CBS 708.71 / DSM 1257 / FGSC 987).